The sequence spans 460 residues: Cyclic 2,3-diphosphoglycerate synthetase (460 aa).

In terms of assembly, homodimer.

It localises to the cytoplasm. The enzyme catalyses (2R)-2,3-bisphosphoglycerate + ATP + H(+) = cyclic (2R)-2,3-bisphosphoglycerate + ADP + phosphate. Catalyzes the formation of cyclic 2,3-diphosphoglycerate (cDPG) by formation of an intramolecular phosphoanhydride bond at the expense of ATP. It is also able to catalyze the hydrolysis of cDPG but with significant slower rates (8-10 times). May be involved in thermoadaptation. The protein is Cyclic 2,3-diphosphoglycerate synthetase (cpgS) of Methanothermus fervidus (strain ATCC 43054 / DSM 2088 / JCM 10308 / V24 S).